Consider the following 177-residue polypeptide: Large ribosomal subunit protein uL6 (177 aa).

It belongs to the universal ribosomal protein uL6 family. In terms of assembly, part of the 50S ribosomal subunit.

Functionally, this protein binds to the 23S rRNA, and is important in its secondary structure. It is located near the subunit interface in the base of the L7/L12 stalk, and near the tRNA binding site of the peptidyltransferase center. The sequence is that of Large ribosomal subunit protein uL6 from Paracoccus denitrificans (strain Pd 1222).